The primary structure comprises 382 residues: Anhydro-N-acetylmuramic acid kinase (382 aa).

15-22 is an ATP binding site; it reads GTSLDGVD.

This sequence belongs to the anhydro-N-acetylmuramic acid kinase family.

It carries out the reaction 1,6-anhydro-N-acetyl-beta-muramate + ATP + H2O = N-acetyl-D-muramate 6-phosphate + ADP + H(+). Its pathway is amino-sugar metabolism; 1,6-anhydro-N-acetylmuramate degradation. It participates in cell wall biogenesis; peptidoglycan recycling. Its function is as follows. Catalyzes the specific phosphorylation of 1,6-anhydro-N-acetylmuramic acid (anhMurNAc) with the simultaneous cleavage of the 1,6-anhydro ring, generating MurNAc-6-P. Is required for the utilization of anhMurNAc either imported from the medium or derived from its own cell wall murein, and thus plays a role in cell wall recycling. The chain is Anhydro-N-acetylmuramic acid kinase from Haemophilus influenzae (strain ATCC 51907 / DSM 11121 / KW20 / Rd).